Consider the following 732-residue polypeptide: Guanylate cyclase soluble subunit alpha-2 (732 aa).

The tract at residues 1–58 (MSRRKISSESFSSLGSDYLETSPEEEGECPLSRLCWNGSRSPPGPLEPSPAAAAAAAA) is disordered. The segment covering 49–58 (SPAAAAAAAA) has biased composition (low complexity). The Guanylate cyclase domain maps to 521-648 (TMLFSDIVGF…NNVTLASKFE (128 aa)).

It belongs to the adenylyl cyclase class-4/guanylyl cyclase family. In terms of assembly, heterodimer of an alpha and a beta chain. As to expression, isoform 1 is expressed in fetal brain, liver, colon, endothelium and testis. Isoform 2 is expressed only in liver, colon and endothelium.

Its subcellular location is the cytoplasm. It catalyses the reaction GTP = 3',5'-cyclic GMP + diphosphate. Its activity is regulated as follows. Activated by nitric oxide in the presence of magnesium or manganese ions. Its function is as follows. Has guanylyl cyclase on binding to the beta-1 subunit. Isoform 2 acts as a negative regulator of guanylyl cyclase activity as it forms non-functional heterodimers with the beta subunits. This is Guanylate cyclase soluble subunit alpha-2 (GUCY1A2) from Homo sapiens (Human).